Consider the following 274-residue polypeptide: MEALRQRIEAAFEARANITPSSVEPGVRADVETVINMLDKGEMRVAEKIDGQWHVNQWLKKAVLLSFRIFDNGVIEGGETKYFDKVPMKFADYDEARFRAEAIRVVPPAAVRKGSFIGKNTVLMPSYVNLGAYVDEGTMVDTWATVGSCAQIGKNVHLSGGVGIGGVLEPLQAGPTIIEDNCFIGARSEIVEGVVVEEGSVISMGVYIGQSTRIYDRETGEIHYGRVPAGSVVVSGTLPSSCGKYNLYAAIIVKKVDEKTRGKVGINELLRIVD.

Substrate-binding residues include arginine 104 and aspartate 141.

The protein belongs to the transferase hexapeptide repeat family. As to quaternary structure, homotrimer.

It is found in the cytoplasm. The catalysed reaction is (S)-2,3,4,5-tetrahydrodipicolinate + succinyl-CoA + H2O = (S)-2-succinylamino-6-oxoheptanedioate + CoA. It participates in amino-acid biosynthesis; L-lysine biosynthesis via DAP pathway; LL-2,6-diaminopimelate from (S)-tetrahydrodipicolinate (succinylase route): step 1/3. The protein is 2,3,4,5-tetrahydropyridine-2,6-dicarboxylate N-succinyltransferase of Shewanella amazonensis (strain ATCC BAA-1098 / SB2B).